Reading from the N-terminus, the 72-residue chain is Alpha-conotoxin SII (72 aa).

A signal peptide spans 1–21 (MGMRMMFTVFLLVVLATTVVS). Positions 22 to 50 (FPSDRASDGRDDEAKDERSDMHESDRNGR) are excised as a propeptide. The disordered stretch occupies residues 23-51 (PSDRASDGRDDEAKDERSDMHESDRNGRG). Positions 26-49 (RASDGRDDEAKDERSDMHESDRNG) are enriched in basic and acidic residues. Intrachain disulfides connect cysteine 52-cysteine 68, cysteine 53-cysteine 58, and cysteine 54-cysteine 64. A propeptide spanning residues 70–72 (RTL) is cleaved from the precursor.

It belongs to the conotoxin A superfamily. Post-translationally, the disulfide bond Cys-52-Cys-68 (Cys I-VI), which corresponds to an extra disulfide bond when compared to the cysteine framework I (CC-C-C), does contribute to conotoxin SII stability and imparts a unique binding mode at the nAChR. Expressed by the venom duct.

The protein localises to the secreted. Alpha-conotoxins act on postsynaptic membranes, they bind to the nicotinic acetylcholine receptors (nAChR) and thus inhibit them. This toxin potently inhibits the rodent muscle nAChR (IC(50)=120 nM (adult subtype, alpha-1-beta-1-delta-epsilon/CHRNA1-CHRNB1-CHRND-CHRNE) and IC(50)=370 nM (fetal subtype, alpha-1-beta-1-gamma-delta/CHRNA1-CHRNB1-CHRNG-CHRND)) and weakly inhibits neuronal nAChRs. In contrast to alpha-conotoxins bearing 2 disulfide bonds (framework I), this conotoxin acts via a unique binding mode with the helix and the N- and C-termini buried in the binding pocket of muscle nAChRs. In Conus striatus (Striated cone), this protein is Alpha-conotoxin SII.